Here is a 286-residue protein sequence, read N- to C-terminus: MDEKELIERAGGPVTRGRLVRDLEALGVGAGDTVMVHTRMSAIGYVVGGPQTVIDAVRDAVGADGTLMAYCGWNDAPPYDLAEWPPAWREAARAEWPAYDPLLSEADRGNGRVPEALRHQPGAVRSRHPDASFVAVGPAAHPLMDDHPWDDPHGPDSPLARLAGAGGRVLLLGAPLDTLTLLHHAEARAEAPGKRFVAYEQPVTVGGRRVWRRFRDVDTSRGVPYGRVVPEGVVPFTVIAQDMLAAGIGRTGRVAAAPVHLFEAADVVRFGVEWIESRMGGAAGGA.

It belongs to the antibiotic N-acetyltransferase family.

It catalyses the reaction a 2-deoxystreptamine antibiotic + acetyl-CoA = an N(3)-acetyl-2-deoxystreptamine antibiotic + CoA + H(+). Resistance to neomycin. The chain is Aminoglycoside N(3)-acetyltransferase VIII (aacC8) from Streptomyces fradiae (Streptomyces roseoflavus).